A 207-amino-acid chain; its full sequence is Urease accessory protein UreG (207 aa).

Residue 14–21 (GPVGSGKT) coordinates GTP.

This sequence belongs to the SIMIBI class G3E GTPase family. UreG subfamily. As to quaternary structure, homodimer. UreD, UreF and UreG form a complex that acts as a GTP-hydrolysis-dependent molecular chaperone, activating the urease apoprotein by helping to assemble the nickel containing metallocenter of UreC. The UreE protein probably delivers the nickel.

The protein localises to the cytoplasm. Functionally, facilitates the functional incorporation of the urease nickel metallocenter. This process requires GTP hydrolysis, probably effectuated by UreG. This chain is Urease accessory protein UreG, found in Chelativorans sp. (strain BNC1).